An 872-amino-acid chain; its full sequence is G-type lectin S-receptor-like serine/threonine-protein kinase At5g35370 (872 aa).

The N-terminal stretch at 1–26 (MKSTFLLLLLLLSLNLLFVFVSCASS) is a signal peptide. At 27–443 (IEFVYPNFTA…NNNRGGSSFP (417 aa)) the chain is on the extracellular side. 3 N-linked (GlcNAc...) asparagine glycosylation sites follow: Asn33, Asn148, and Asn239. The Bulb-type lectin domain maps to 35–156 (TASNLRFVDS…LNVSLWESFD (122 aa)). The region spanning 283–322 (PMDSCQIPFVCGKLGLCNLDNASENQSCSCPDEMRMDAGK) is the EGF-like; atypical domain. 2 disulfides stabilise this stretch: Cys287–Cys299 and Cys293–Cys310. N-linked (GlcNAc...) asparagine glycans are attached at residues Asn303, Asn307, Asn342, Asn379, and Asn389. In terms of domain architecture, PAN spans 338–423 (CEARNISYLE…HDLIGYVKLS (86 aa)). 2 disulfide bridges follow: Cys372–Cys394 and Cys376–Cys382. The chain crosses the membrane as a helical span at residues 444 to 464 (VIALVLLPCSGFFLLIALGLL). Over 465–872 (WWRRCAVMRY…IASQEVSGPR (408 aa)) the chain is Cytoplasmic. The Protein kinase domain maps to 515 to 814 (ENFKMQIGSG…GSIPLGNPRM (300 aa)). ATP-binding positions include 521–529 (IGSGGFGSV) and Lys543. A caM-binding region spans residues 603–620 (GNGPVLEWQERFDIALGT). Asp639 acts as the Proton acceptor in catalysis. At Ser656 the chain carries Phosphoserine. Position 673 is a phosphothreonine (Thr673). Ser716 and Ser859 each carry phosphoserine. The segment at 836–872 (QNGESETMVFHRRESSNSGGSRQSASYIASQEVSGPR) is disordered. Residues 851–861 (SNSGGSRQSAS) show a composition bias toward low complexity. The segment covering 862–872 (YIASQEVSGPR) has biased composition (polar residues).

This sequence belongs to the protein kinase superfamily. Ser/Thr protein kinase family.

Its subcellular location is the cell membrane. It catalyses the reaction L-seryl-[protein] + ATP = O-phospho-L-seryl-[protein] + ADP + H(+). The enzyme catalyses L-threonyl-[protein] + ATP = O-phospho-L-threonyl-[protein] + ADP + H(+). In Arabidopsis thaliana (Mouse-ear cress), this protein is G-type lectin S-receptor-like serine/threonine-protein kinase At5g35370.